The following is a 306-amino-acid chain: Homeobox protein HMX3 (306 aa).

The tract at residues 95-181 is disordered; the sequence is HTPRTEVPDK…DKKPCRKKKT (87 aa). Composition is skewed to basic and acidic residues over residues 117–143 and 153–174; these read GERD…KSPE and EEGK…PDKK. The homeobox DNA-binding region spans 178–237; sequence KKKTRTVFSRSQVFQLESTFDMKRYLSSSERAGLAASLHLTETQVKIWFQNRRNKWKRQL.

It belongs to the HMX homeobox family.

It localises to the nucleus. In terms of biological role, transcription factor involved in specification of neuronal cell types and which is required for inner ear and hypothalamus development. Binds to the 5'-CAAGTG-3' core sequence. May act as a stage-specific inhibitor of anf1 in the anterior neural plate during the development. The protein is Homeobox protein HMX3 (hmx3) of Xenopus laevis (African clawed frog).